A 329-amino-acid chain; its full sequence is Catabolite control protein A (329 aa).

An HTH lacI-type domain is found at 1–57 (MTVTIYDVAREARVSMATVSRVVNGNQNVKAETKNKVNEVIKRLNYRPNAVARGLAS). A DNA-binding region (H-T-H motif) is located at residues 5-24 (IYDVAREARVSMATVSRVVN).

Functionally, global transcriptional regulator of carbon catabolite repression (CCR) and carbon catabolite activation (CCA), which ensures optimal energy usage under diverse conditions. The polypeptide is Catabolite control protein A (ccpA) (Staphylococcus aureus (strain MRSA252)).